A 285-amino-acid chain; its full sequence is Iron uptake system component EfeM (285 aa).

The N-terminal stretch at 1-34 is a signal peptide; the sequence is MTYPLLTRKTLMKKTPLALLLTLGLLQTPLAAFA.

It belongs to the EfeM/EfeO family. Component of the iron transporter efeUOB/M complex composed of EfeU, EfeM and EfeB.

The protein localises to the periplasm. In terms of biological role, part of the iron transporter system efeUOB/M involved in iron import. Specifically binds Fe(3+), which is produced by EfeB-mediated oxidation of Fe(2+), and delivers it to the cell inner membrane permease EfeU. Also binds Zn(2+) and Cu(2+) in vitro. This chain is Iron uptake system component EfeM, found in Pseudomonas syringae pv. syringae (strain B728a).